A 338-amino-acid chain; its full sequence is Ketol-acid reductoisomerase (NADP(+)) (338 aa).

One can recognise a KARI N-terminal Rossmann domain in the interval 1-181 (MKVFYDKDCD…GGGKAGIIET (181 aa)). NADP(+)-binding positions include 24 to 27 (YGSQ), R47, and S52. H107 is an active-site residue. Residue G133 coordinates NADP(+). The 146-residue stretch at 182–327 (TFREETETDL…EKLRAMMPWI (146 aa)) folds into the KARI C-terminal knotted domain. D190, E194, E226, and E230 together coordinate Mg(2+). Substrate is bound at residue S251.

It belongs to the ketol-acid reductoisomerase family. Mg(2+) serves as cofactor.

It carries out the reaction (2R)-2,3-dihydroxy-3-methylbutanoate + NADP(+) = (2S)-2-acetolactate + NADPH + H(+). It catalyses the reaction (2R,3R)-2,3-dihydroxy-3-methylpentanoate + NADP(+) = (S)-2-ethyl-2-hydroxy-3-oxobutanoate + NADPH + H(+). Its pathway is amino-acid biosynthesis; L-isoleucine biosynthesis; L-isoleucine from 2-oxobutanoate: step 2/4. It participates in amino-acid biosynthesis; L-valine biosynthesis; L-valine from pyruvate: step 2/4. Involved in the biosynthesis of branched-chain amino acids (BCAA). Catalyzes an alkyl-migration followed by a ketol-acid reduction of (S)-2-acetolactate (S2AL) to yield (R)-2,3-dihydroxy-isovalerate. In the isomerase reaction, S2AL is rearranged via a Mg-dependent methyl migration to produce 3-hydroxy-3-methyl-2-ketobutyrate (HMKB). In the reductase reaction, this 2-ketoacid undergoes a metal-dependent reduction by NADPH to yield (R)-2,3-dihydroxy-isovalerate. The chain is Ketol-acid reductoisomerase (NADP(+)) from Albidiferax ferrireducens (strain ATCC BAA-621 / DSM 15236 / T118) (Rhodoferax ferrireducens).